A 291-amino-acid polypeptide reads, in one-letter code: MEPLGLVVHGKAEPFSAALRSLVNNPRYSDVCFVVGQERQEVFAHRCLLACRCNFFQRLLGTEPGPGVPSPVVLSTVPTEAFLAVLEFLYTNSVKLYRHSVLEVLTAAVEYGLEELRELCLQFVVKVLDVDLVCEALQVAVTFGLGQLQERCVAFIEAHSQEALRTRGFLELSAAALLPLLRSDKLCVDEAELVRAARSWARVGAAVLERPVAEVAAPVVKELRLALLAPAELSALEEQNRQEPLIPVEQIVEAWKCHALRRGDEARGAPCRRRRGTLPREHHRFLDLSFK.

The region spanning 29-98 (SDVCFVVGQE…LYTNSVKLYR (70 aa)) is the BTB domain. The region spanning 134-234 (CEALQVAVTF…LALLAPAELS (101 aa)) is the BACK domain.

This chain is BTB/POZ domain-containing protein 19 (BTBD19), found in Homo sapiens (Human).